The following is a 360-amino-acid chain: G-protein coupled receptor 15 (360 aa).

The Extracellular segment spans residues 1 to 33; it reads MDPEETSVYLDYYYATSPNPDIRETHSHVPYTS. The chain crosses the membrane as a helical span at residues 34-54; that stretch reads VFLPVFYTAVFLTGVLGNLVL. At 55–69 the chain is on the cytoplasmic side; that stretch reads MGALHFKPGSRRLID. The helical transmembrane segment at 70–90 threads the bilayer; it reads IFIINLAASDFIFLVTLPLWV. The Extracellular portion of the chain corresponds to 91-120; that stretch reads DKEASLGLWRTGSFLCKGSSYMISVNMHCS. A helical membrane pass occupies residues 121-141; the sequence is VFLLTCMSVDRYLAIVCPVVS. Residues 142-149 are Cytoplasmic-facing; the sequence is RKFRRTDC. The helical transmembrane segment at 150-170 threads the bilayer; that stretch reads AYVVCASIWFISCLLGLPTLL. The Extracellular portion of the chain corresponds to 171–192; sequence SRELTLIDDKPYCAEKKATPLK. Residues 193-213 traverse the membrane as a helical segment; the sequence is LIWSLVALIFTFFVPLLSIVT. At 214 to 239 the chain is on the cytoplasmic side; it reads CYCCIARKLCAHYQQSGKHNKKLKKS. A helical transmembrane segment spans residues 240-260; the sequence is IKIIFIVVAAFLVSWLPFNTF. The Extracellular portion of the chain corresponds to 261 to 284; it reads KLLAIVSGLQQERYFPSAMLQLGM. Residues 285-305 form a helical membrane-spanning segment; it reads EVSGPLAFANSCVNPFIYYIF. Residues 306 to 360 lie on the Cytoplasmic side of the membrane; the sequence is DSYIRRAIVHCLCPCLKNYDFGSSTETSDSHLTKALSTFIHAEDFTRRRKRSVSL. A Phosphoserine modification is found at S359.

It belongs to the G-protein coupled receptor 1 family. As to quaternary structure, interacts with adapter YWHAE; this interaction promotes ER-to-Golgi transport of GPR15. In terms of processing, phosphorylation is necessary for YWHAE binding and efficient surface expression. O-glycosylated. Sialylated O-glycans in the N-terminal tail inhibits binding of GPR15LG. Post-translationally, sulfation is required for efficient binding of GPR15LG.

Its subcellular location is the cell membrane. G protein-coupled receptor that plays an important role in immune homeostasis. Acts via its natural ligand GPR15LG, a chemokine-like polypeptide strongly expressed in gastrointestinal tissues. GPR15-GPR15LG signaling axis regulates intestinal homeostasis and inflammation through the migration of immune cells. Controls thereby the specific homing of T-cells, particularly FOXP3+ regulatory T-cells (Tregs), to the large intestine lamina propria. Also required for skin localization of thymus-derived dendritic epidermal T-cells. Plays an important role in mediating cytoprotective function as well as angiogenesis of thrombomodulin. Mechanistically, preferentially signals through the Gi/o pathway to inhibit adenylate cyclase activity and activate a phosphatidylinositol-calcium second messenger system that regulates the release of Ca(2+) ions from intracellular stores. The sequence is that of G-protein coupled receptor 15 (GPR15) from Macaca mulatta (Rhesus macaque).